Here is a 429-residue protein sequence, read N- to C-terminus: Enolase (429 aa).

Residue Gln-162 coordinates (2R)-2-phosphoglycerate. The Proton donor role is filled by Glu-204. Asp-241, Glu-288, and Asp-315 together coordinate Mg(2+). Positions 340, 369, 370, and 391 each coordinate (2R)-2-phosphoglycerate. The active-site Proton acceptor is Lys-340.

This sequence belongs to the enolase family. Requires Mg(2+) as cofactor.

The protein localises to the cytoplasm. It is found in the secreted. It localises to the cell surface. It catalyses the reaction (2R)-2-phosphoglycerate = phosphoenolpyruvate + H2O. It functions in the pathway carbohydrate degradation; glycolysis; pyruvate from D-glyceraldehyde 3-phosphate: step 4/5. Functionally, catalyzes the reversible conversion of 2-phosphoglycerate (2-PG) into phosphoenolpyruvate (PEP). It is essential for the degradation of carbohydrates via glycolysis. This chain is Enolase, found in Bacteroides fragilis (strain ATCC 25285 / DSM 2151 / CCUG 4856 / JCM 11019 / LMG 10263 / NCTC 9343 / Onslow / VPI 2553 / EN-2).